A 177-amino-acid chain; its full sequence is ATP synthase subunit delta (177 aa).

Belongs to the ATPase delta chain family. In terms of assembly, F-type ATPases have 2 components, F(1) - the catalytic core - and F(0) - the membrane proton channel. F(1) has five subunits: alpha(3), beta(3), gamma(1), delta(1), epsilon(1). F(0) has three main subunits: a(1), b(2) and c(10-14). The alpha and beta chains form an alternating ring which encloses part of the gamma chain. F(1) is attached to F(0) by a central stalk formed by the gamma and epsilon chains, while a peripheral stalk is formed by the delta and b chains.

It is found in the cell inner membrane. Its function is as follows. F(1)F(0) ATP synthase produces ATP from ADP in the presence of a proton or sodium gradient. F-type ATPases consist of two structural domains, F(1) containing the extramembraneous catalytic core and F(0) containing the membrane proton channel, linked together by a central stalk and a peripheral stalk. During catalysis, ATP synthesis in the catalytic domain of F(1) is coupled via a rotary mechanism of the central stalk subunits to proton translocation. This protein is part of the stalk that links CF(0) to CF(1). It either transmits conformational changes from CF(0) to CF(1) or is implicated in proton conduction. This chain is ATP synthase subunit delta, found in Shewanella loihica (strain ATCC BAA-1088 / PV-4).